The primary structure comprises 76 residues: Small ribosomal subunit protein bS18 (76 aa).

Belongs to the bacterial ribosomal protein bS18 family. Part of the 30S ribosomal subunit. Forms a tight heterodimer with protein bS6.

Functionally, binds as a heterodimer with protein bS6 to the central domain of the 16S rRNA, where it helps stabilize the platform of the 30S subunit. This chain is Small ribosomal subunit protein bS18, found in Alkaliphilus metalliredigens (strain QYMF).